The chain runs to 104 residues: Cytochrome c-552 (104 aa).

Positions 1 to 23 (MHLHLRGICLVLAVASSSSSALA) are cleaved as a signal peptide. Heme c-binding residues include cysteine 37, cysteine 40, histidine 41, and methionine 82.

The protein belongs to the cytochrome c family. As to quaternary structure, monoheme monomer. Has the tendency to dimerize. In terms of processing, binds 1 heme c group covalently per subunit.

It is found in the periplasm. The chain is Cytochrome c-552 (cycB) from Bradyrhizobium diazoefficiens (strain JCM 10833 / BCRC 13528 / IAM 13628 / NBRC 14792 / USDA 110).